The following is a 215-amino-acid chain: Probable cutinase 3 (215 aa).

The first 17 residues, 1 to 17 (MHFRALLVSALATLAMA), serve as a signal peptide directing secretion. 2 disulfides stabilise this stretch: Cys-39/Cys-118 and Cys-65/Cys-79. Residue Ser-129 is the Nucleophile of the active site. Cysteines 180 and 187 form a disulfide. Asp-184 is a catalytic residue. Residue His-197 is the Proton donor/acceptor of the active site.

It belongs to the cutinase family.

Its subcellular location is the secreted. It carries out the reaction cutin + H2O = cutin monomers.. In terms of biological role, catalyzes the hydrolysis of complex carboxylic polyesters found in the cell wall of plants. Degrades cutin, a macromolecule that forms the structure of the plant cuticle. The chain is Probable cutinase 3 from Aspergillus clavatus (strain ATCC 1007 / CBS 513.65 / DSM 816 / NCTC 3887 / NRRL 1 / QM 1276 / 107).